The following is a 257-amino-acid chain: Type III pantothenate kinase (257 aa).

Asp6–Val13 serves as a coordination point for ATP. Residues Tyr102 and Gly109–Arg112 each bind substrate. Asp111 serves as the catalytic Proton acceptor. Asp131 contacts K(+). Residue Thr134 coordinates ATP. Substrate is bound at residue Thr186.

It belongs to the type III pantothenate kinase family. As to quaternary structure, homodimer. It depends on NH4(+) as a cofactor. The cofactor is K(+).

The protein resides in the cytoplasm. The catalysed reaction is (R)-pantothenate + ATP = (R)-4'-phosphopantothenate + ADP + H(+). Its pathway is cofactor biosynthesis; coenzyme A biosynthesis; CoA from (R)-pantothenate: step 1/5. In terms of biological role, catalyzes the phosphorylation of pantothenate (Pan), the first step in CoA biosynthesis. The protein is Type III pantothenate kinase of Leptospira interrogans serogroup Icterohaemorrhagiae serovar copenhageni (strain Fiocruz L1-130).